A 387-amino-acid chain; its full sequence is Alanine racemase (387 aa).

Lysine 38 functions as the Proton acceptor; specific for D-alanine in the catalytic mechanism. Lysine 38 is modified (N6-(pyridoxal phosphate)lysine). A substrate-binding site is contributed by arginine 136. Tyrosine 267 functions as the Proton acceptor; specific for L-alanine in the catalytic mechanism. Methionine 316 lines the substrate pocket.

It belongs to the alanine racemase family. It depends on pyridoxal 5'-phosphate as a cofactor.

It carries out the reaction L-alanine = D-alanine. It participates in amino-acid biosynthesis; D-alanine biosynthesis; D-alanine from L-alanine: step 1/1. Functionally, catalyzes the interconversion of L-alanine and D-alanine. May also act on other amino acids. The protein is Alanine racemase (alr) of Clostridium tetani (strain Massachusetts / E88).